The sequence spans 141 residues: Thioredoxin-like protein SkfH (141 aa).

The Thioredoxin domain occupies Lys-2–Leu-141. A disulfide bond links Cys-41 and Cys-44.

Required for production of the bacteriocin SkfA. This chain is Thioredoxin-like protein SkfH, found in Bacillus subtilis (strain 168).